The primary structure comprises 249 residues: 2-C-methyl-D-erythritol 4-phosphate cytidylyltransferase (249 aa).

The protein belongs to the IspD/TarI cytidylyltransferase family. IspD subfamily.

It carries out the reaction 2-C-methyl-D-erythritol 4-phosphate + CTP + H(+) = 4-CDP-2-C-methyl-D-erythritol + diphosphate. The protein operates within isoprenoid biosynthesis; isopentenyl diphosphate biosynthesis via DXP pathway; isopentenyl diphosphate from 1-deoxy-D-xylulose 5-phosphate: step 2/6. Catalyzes the formation of 4-diphosphocytidyl-2-C-methyl-D-erythritol from CTP and 2-C-methyl-D-erythritol 4-phosphate (MEP). This is 2-C-methyl-D-erythritol 4-phosphate cytidylyltransferase from Thermobifida fusca (strain YX).